We begin with the raw amino-acid sequence, 227 residues long: Cytochrome c oxidase subunit 2 (227 aa).

Topologically, residues 1–14 are mitochondrial intermembrane; that stretch reads MAYPFQLGLQDATS. A helical membrane pass occupies residues 15–45; the sequence is PIMEELTNFHDHTLMIVFLISTLVLYIISLM. Residues 46–59 lie on the Mitochondrial matrix side of the membrane; that stretch reads LTTKLTHTSTMDAQ. A helical membrane pass occupies residues 60–87; it reads EVETIWTILPAVILILIALPSLRILYMM. At 88–227 the chain is on the mitochondrial intermembrane side; it reads DEINNPVLTV…YFENWSASMI (140 aa). Cu cation-binding residues include H161, C196, E198, C200, H204, and M207. E198 contributes to the Mg(2+) binding site. A Phosphotyrosine modification is found at Y218.

The protein belongs to the cytochrome c oxidase subunit 2 family. As to quaternary structure, component of the cytochrome c oxidase (complex IV, CIV), a multisubunit enzyme composed of 14 subunits. The complex is composed of a catalytic core of 3 subunits MT-CO1, MT-CO2 and MT-CO3, encoded in the mitochondrial DNA, and 11 supernumerary subunits COX4I, COX5A, COX5B, COX6A, COX6B, COX6C, COX7A, COX7B, COX7C, COX8 and NDUFA4, which are encoded in the nuclear genome. The complex exists as a monomer or a dimer and forms supercomplexes (SCs) in the inner mitochondrial membrane with NADH-ubiquinone oxidoreductase (complex I, CI) and ubiquinol-cytochrome c oxidoreductase (cytochrome b-c1 complex, complex III, CIII), resulting in different assemblies (supercomplex SCI(1)III(2)IV(1) and megacomplex MCI(2)III(2)IV(2)). Found in a complex with TMEM177, COA6, COX18, COX20, SCO1 and SCO2. Interacts with TMEM177 in a COX20-dependent manner. Interacts with COX20. Interacts with COX16. The cofactor is Cu cation.

It localises to the mitochondrion inner membrane. It catalyses the reaction 4 Fe(II)-[cytochrome c] + O2 + 8 H(+)(in) = 4 Fe(III)-[cytochrome c] + 2 H2O + 4 H(+)(out). Its function is as follows. Component of the cytochrome c oxidase, the last enzyme in the mitochondrial electron transport chain which drives oxidative phosphorylation. The respiratory chain contains 3 multisubunit complexes succinate dehydrogenase (complex II, CII), ubiquinol-cytochrome c oxidoreductase (cytochrome b-c1 complex, complex III, CIII) and cytochrome c oxidase (complex IV, CIV), that cooperate to transfer electrons derived from NADH and succinate to molecular oxygen, creating an electrochemical gradient over the inner membrane that drives transmembrane transport and the ATP synthase. Cytochrome c oxidase is the component of the respiratory chain that catalyzes the reduction of oxygen to water. Electrons originating from reduced cytochrome c in the intermembrane space (IMS) are transferred via the dinuclear copper A center (CU(A)) of subunit 2 and heme A of subunit 1 to the active site in subunit 1, a binuclear center (BNC) formed by heme A3 and copper B (CU(B)). The BNC reduces molecular oxygen to 2 water molecules using 4 electrons from cytochrome c in the IMS and 4 protons from the mitochondrial matrix. This chain is Cytochrome c oxidase subunit 2 (MT-CO2), found in Leopoldamys sabanus (Long-tailed giant rat).